A 464-amino-acid polypeptide reads, in one-letter code: Putative guanine nucleotide-binding protein subunit alpha (464 aa).

In terms of domain architecture, G-alpha spans His33–Lys415. Positions Leu36–Thr49 are G1 motif. Residues Gly41–Ser48, Asp147–Gln151, Leu214–Thr220, Asp239–Gln243, Arg268–Asp271, and Thr310–Ser313 contribute to the GTP site. Residue Ser48 participates in Mg(2+) binding. Residues Asp212–Thr220 are G2 motif. Thr220 provides a ligand contact to Mg(2+). Residues Phe235 to Arg244 are G3 motif. A G4 motif region spans residues Val306–Ser313. The G5 motif stretch occupies residues Gly382–Cys387.

The protein in the N-terminal section; belongs to the G-alpha family. It in the C-terminal section; belongs to the class-II aminoacyl-tRNA synthetase family. G proteins are composed of 3 units; alpha, beta and gamma. The alpha chain contains the guanine nucleotide binding site.

Its function is as follows. Guanine nucleotide-binding proteins (G proteins) are involved as modulators or transducers in various transmembrane signaling systems. In Leishmania donovani, this protein is Putative guanine nucleotide-binding protein subunit alpha.